The chain runs to 274 residues: Putative bidirectional sugar transporter SWEET7d (274 aa).

Topologically, residues 1–8 are extracellular; that stretch reads MVPDLIRN. The chain crosses the membrane as a helical span at residues 9–29; it reads VVGIVGNVISFGLFLSPVPTF. The MtN3/slv 1 domain maps to 9-96; the sequence is VVGIVGNVIS…TIFFLFSDKK (88 aa). Residues 30–45 lie on the Cytoplasmic side of the membrane; sequence WRIIKNKDVRDFKADQ. The chain crosses the membrane as a helical span at residues 46–66; the sequence is YLATLLNCMLWVFYGLPIVHP. The Extracellular portion of the chain corresponds to 67 to 68; that stretch reads NS. A helical membrane pass occupies residues 69-89; sequence ILVVTINGIGLVIEAVYLTIF. The Cytoplasmic portion of the chain corresponds to 90–100; sequence FLFSDKKNKKK. A helical transmembrane segment spans residues 101 to 121; the sequence is MGVVLATEALFMAAVALGVLL. The Extracellular segment spans residues 122–130; sequence DAHTHQRRS. The chain crosses the membrane as a helical span at residues 131 to 151; the sequence is LIVGILCVIFGTIMYSSPLTI. Residues 132–214 form the MtN3/slv 2 domain; sequence IVGILCVIFG…QLILYAIYYR (83 aa). At 152 to 164 the chain is on the cytoplasmic side; the sequence is MSQVVKTKSVEYM. Residues 165–185 traverse the membrane as a helical segment; sequence PLLLSVVSFLNGLCWTSYALI. The Extracellular portion of the chain corresponds to 186–188; the sequence is RFD. A helical membrane pass occupies residues 189-209; the sequence is IFITIPNGLGVLFALMQLILY. Residues 210–274 lie on the Cytoplasmic side of the membrane; that stretch reads AIYYRTTPKK…SISRLSHKLA (65 aa). The tract at residues 218-274 is disordered; it reads KKPSTTGPHPRSRIRTSSYQPSPPSPRAPASSPLSARTTTSMAAMSPSISRLSHKLA. Low complexity predominate over residues 245–258; it reads APASSPLSARTTTS.

The protein belongs to the SWEET sugar transporter family. Forms homooligomers and/or heterooligomers.

The protein resides in the cell membrane. Functionally, mediates both low-affinity uptake and efflux of sugar across the plasma membrane. The polypeptide is Putative bidirectional sugar transporter SWEET7d (SWEET7D) (Oryza sativa subsp. japonica (Rice)).